Here is a 422-residue protein sequence, read N- to C-terminus: UDP-N-acetyl-D-glucosamine 6-dehydrogenase (422 aa).

NAD(+)-binding residues include valine 14, aspartate 32, arginine 37, threonine 83, and threonine 118. The active-site Nucleophile is cysteine 258. Position 329 (arginine 329) interacts with NAD(+).

The protein belongs to the UDP-glucose/GDP-mannose dehydrogenase family.

It carries out the reaction UDP-N-acetyl-alpha-D-glucosamine + 2 NAD(+) + H2O = UDP-2-acetamido-2-deoxy-alpha-D-glucuronate + 2 NADH + 3 H(+). The protein operates within bacterial outer membrane biogenesis; LPS O-antigen biosynthesis. Requires either potassium or ammonium-containing salts for activity. In terms of biological role, dehydrogenase required for the biosynthesis of the B-band O antigen of serotype O6 lipopolysaccharide. Is also required for flagellin glycosylation. Catalyzes the conversion of UDP-N-acetylglucosamine (UDP-GlcNAc) to UDP-N-acetylglucosaminuronic acid (UDP-GlcNAcA). Can also catalyze the conversion of UDP-N-acetyl-galactosamine (UDP-GalNAc) to UDP-N-acetylgalactosaminuronic acid (UDP-GalNAcA), with low efficiency. Can use NAD(+) or NADP(+), with a preference for NAD(+). The chain is UDP-N-acetyl-D-glucosamine 6-dehydrogenase from Pseudomonas aeruginosa.